Reading from the N-terminus, the 1333-residue chain is MDPPQLLFYVNGQKVVENNVDPEMMLLPYLRKNLRLTGTKYGCGGGGCGACTVMISRYNPSTKSIRHHPVNACLTPICSLYGTAVTTVEGIGNTRTRLHPVQERIAKCHSTQCGFCTPGMVMSMYALLRNHPEPSLDQLTDALGGNLCRCTGYRPIIDACKTFCRASGCCESKENGVCCLDQGINGSAEFQEGDETSPELFSEKEFQPLDPTQELIFPPELMRIAEKQPPKTRVFYSNRMTWISPVTLEELVEAKFKYPGAPIVMGYTSVGPEVKFKGVFHPIIISPDRIEELSIINQTGDGLTLGAGLSLDQVKDILTDVVQKLPEETTQTYRALLKHLRTLAGSQIRNMASLGGHIVSRHLDSDLNPLLAVGNCTLNLLSKDGKRQIPLSEQFLRKCPDSDLKPQEVLVSVNIPCSRKWEFVSAFRQAQRQQNALAIVNSGMRVLFREGGGVIKELSILYGGVGPTTIGAKNSCQKLIGRPWNEEMLDTACRLVLDEVTLAGSAPGGKVEFKRTLIISFLFKFYLEVLQGLKREDPGHYPSLTNNYESALEDLHSKHHWRTLTHQNVDSMQLPQDPIGRPIMHLSGIKHATGEAIYCDDMPAVDRELFLTFVTSSRAHAKIVSIDLSEALSLPGVVDIITADHLQDATTFGTETLLATDKVHCVGQLVCAVIADSETRAKQAAKHVKVVYRDLEPLILTIEEAIQHKSFFESERKLECGNVDEAFKIADQILEGEIHIGGQEHFYMETQSMLVVPKGEDGEIDIYVSTQFPKHIQDIVAATLKLSVNKVMCHVRRVGGAFGGKVGKTSIMAAITAFAASKHGRAVRCTLERGEDMLITGGRHPYLGKYKVGFMRDGRIVALDVEHYCNGGSSLDESLWVIEMGLLKMDNAYKFPNLRCRGWACRTNLPSHTALRGFGFPQAGLVTEACVTEVAIRCGLSPEQVRTINMYKQIDNTHYKQEFSAKTLFECWRECMAKCSYSERKTAVGKFNAENSWKKRGMAVIPLKFPVGVGSVAMGQAAALVHIYLDGSALVSHGGIEMGQGVHTKMIQVVSRELKMPMSSVHLRGTSTETVPNTNASGGSVVADLNGLAVKDACQTLLKRLEPIISKNPQGTWKDWAQTAFDQSVSLSAVGYFRGYESNINWEKGEGHPFEYFVYGAACSEVEIDCLTGDHKNIRTDIVMDVGHSINPALDIGQVEGAFIQGMGLYTIEELSYSPQGILYSRGPNQYKIPAICDIPTEMHISFLPPSEHSNTLYSSKGLGESGVFLGCSVFFAIHDAVRAARQERGISGPWKLTSPLTPEKIRMACEDKFTKMIPRDEPGSYVPWNIPV.

The region spanning 4 to 91 is the 2Fe-2S ferredoxin-type domain; it reads PQLLFYVNGQ…GTAVTTVEGI (88 aa). 4 residues coordinate [2Fe-2S] cluster: C43, C48, C51, and C73. Q112 contributes to the Mo-molybdopterin binding site. 4 residues coordinate [2Fe-2S] cluster: C113, C116, C148, and C150. C150 is a Mo-molybdopterin binding site. Residues 235-420 enclose the FAD-binding PCMH-type domain; the sequence is FYSNRMTWIS…VSVNIPCSRK (186 aa). FAD-binding positions include 263 to 270, A344, S353, H357, D366, and L410; that span reads IVMGYTSV. Mo-molybdopterin-binding positions include 801–802 and M1042; that span reads AF. Position 1063 is a phosphoserine (S1063). Residues 1083–1086, Q1198, and L1263 contribute to the Mo-molybdopterin site; that span reads GSVV. The Proton acceptor; for azaheterocycle hydroxylase activity role is filled by E1265.

Belongs to the xanthine dehydrogenase family. In terms of assembly, homodimer. Requires [2Fe-2S] cluster as cofactor. The cofactor is FAD. Mo-molybdopterin is required as a cofactor. Post-translationally, the N-terminus is blocked. As to expression, expression in liver (at protein level). Also detected in heart, lung, spleen and kidney.

The protein resides in the cytoplasm. It carries out the reaction an aldehyde + O2 + H2O = a carboxylate + H2O2 + H(+). The enzyme catalyses retinal + O2 + H2O = retinoate + H2O2 + H(+). Inhibited by menadione and isovanillin. Not inhibited by allopurinol, a xanthine dehydrogenase potent inhibitor. Inhibited by the flavonoids quercetin, myricetin and genistein. Nitric oxide generation is inhibited by raloxifene and competitively inhibited by an increase in oxygen levels. Oxidase with broad substrate specificity, oxidizing aromatic azaheterocycles, such as N1-methylnicotinamide, N-methylphthalazinium and phthalazine, as well as aldehydes, such as benzaldehyde, retinal, pyridoxal, and vanillin. Plays a role in the metabolism of xenobiotics and drugs containing aromatic azaheterocyclic substituents. Participates in the bioactivation of prodrugs such as famciclovir, catalyzing the oxidation step from 6-deoxypenciclovir to penciclovir, which is a potent antiviral agent. Is probably involved in the regulation of reactive oxygen species homeostasis. Is a prominent source of superoxide generation via the one-electron reduction of molecular oxygen. Also catalyzes nitric oxide (NO) production; under anaerobic conditions, reduces nitrite to NO with NADH or aldehyde as electron donor, but under aerobic conditions, NADH is the preferred substrate. These reactions may be catalyzed by several isozymes. May play a role in adipogenesis. This is Aldehyde oxidase 1 from Rattus norvegicus (Rat).